We begin with the raw amino-acid sequence, 200 residues long: uncharacterized protein (200 aa).

The segment at 1-21 is disordered; it reads MSNSAQRDARNSRDESARASD. Residues 7–21 show a composition bias toward basic and acidic residues; it reads RDARNSRDESARASD.

This is an uncharacterized protein from Mycobacterium tuberculosis (strain CDC 1551 / Oshkosh).